The primary structure comprises 121 residues: uncharacterized protein (121 aa).

It is found in the mitochondrion. This is an uncharacterized protein from Arabidopsis thaliana (Mouse-ear cress).